Consider the following 173-residue polypeptide: Translation initiation factor IF-3 (173 aa).

Belongs to the IF-3 family. Monomer.

The protein localises to the cytoplasm. IF-3 binds to the 30S ribosomal subunit and shifts the equilibrium between 70S ribosomes and their 50S and 30S subunits in favor of the free subunits, thus enhancing the availability of 30S subunits on which protein synthesis initiation begins. The protein is Translation initiation factor IF-3 of Methylorubrum populi (strain ATCC BAA-705 / NCIMB 13946 / BJ001) (Methylobacterium populi).